Here is a 212-residue protein sequence, read N- to C-terminus: Large ribosomal subunit protein uL3 (212 aa).

The interval 135–156 is disordered; it reads MTHGNSRSHRVPGSIGQNQSPG. The residue at position 153 (Gln153) is an N5-methylglutamine.

This sequence belongs to the universal ribosomal protein uL3 family. Part of the 50S ribosomal subunit. Forms a cluster with proteins L14 and L19. In terms of processing, methylated by PrmB.

In terms of biological role, one of the primary rRNA binding proteins, it binds directly near the 3'-end of the 23S rRNA, where it nucleates assembly of the 50S subunit. The polypeptide is Large ribosomal subunit protein uL3 (Tolumonas auensis (strain DSM 9187 / NBRC 110442 / TA 4)).